Here is a 196-residue protein sequence, read N- to C-terminus: Small ribosomal subunit protein uS4c (196 aa).

Residues 15 to 43 (LGALPGLTRKTPKSGSNQKKKFHSGKKEQ) form a disordered region. In terms of domain architecture, S4 RNA-binding spans 89-150 (MRLDNILFRL…NQRSKRLVQN (62 aa)).

It belongs to the universal ribosomal protein uS4 family. Part of the 30S ribosomal subunit. Contacts protein S5. The interaction surface between S4 and S5 is involved in control of translational fidelity.

Its subcellular location is the plastid. The protein localises to the chloroplast. Its function is as follows. One of the primary rRNA binding proteins, it binds directly to 16S rRNA where it nucleates assembly of the body of the 30S subunit. In terms of biological role, with S5 and S12 plays an important role in translational accuracy. This Melinis repens (Red Natal grass) protein is Small ribosomal subunit protein uS4c (rps4).